We begin with the raw amino-acid sequence, 204 residues long: Histidine biosynthesis bifunctional protein HisIE (204 aa).

The segment at 1–114 is phosphoribosyl-AMP cyclohydrolase; that stretch reads MLTEQQINQL…FAPAASDWSF (114 aa). The segment at 115-204 is phosphoribosyl-ATP pyrophosphohydrolase; sequence LYQLEQLLAS…IGRLRERHEK (90 aa).

This sequence in the N-terminal section; belongs to the PRA-CH family. It in the C-terminal section; belongs to the PRA-PH family.

The protein resides in the cytoplasm. It carries out the reaction 1-(5-phospho-beta-D-ribosyl)-ATP + H2O = 1-(5-phospho-beta-D-ribosyl)-5'-AMP + diphosphate + H(+). The catalysed reaction is 1-(5-phospho-beta-D-ribosyl)-5'-AMP + H2O = 1-(5-phospho-beta-D-ribosyl)-5-[(5-phospho-beta-D-ribosylamino)methylideneamino]imidazole-4-carboxamide. The protein operates within amino-acid biosynthesis; L-histidine biosynthesis; L-histidine from 5-phospho-alpha-D-ribose 1-diphosphate: step 2/9. Its pathway is amino-acid biosynthesis; L-histidine biosynthesis; L-histidine from 5-phospho-alpha-D-ribose 1-diphosphate: step 3/9. This chain is Histidine biosynthesis bifunctional protein HisIE (hisI), found in Yersinia pestis.